The sequence spans 68 residues: MSAEERLIELEIRVAEQEKTIDELSSVLTEQWKTVDQLSKKLNALTNRFLELEEQAAPDVPVTKPPHW.

The protein belongs to the SlyX family.

This chain is Protein SlyX homolog, found in Brucella abortus (strain S19).